Reading from the N-terminus, the 554-residue chain is CTP synthase (554 aa).

Positions 1 to 270 (MTKFVFVTGG…DGLICDKLRL (270 aa)) are amidoligase domain. Ser-13 lines the CTP pocket. Residue Ser-13 participates in UTP binding. ATP is bound by residues 14–19 (SLGKGI) and Asp-71. 2 residues coordinate Mg(2+): Asp-71 and Glu-144. CTP is bound by residues 151–153 (DIE), 191–196 (KTKPTQ), and Lys-227. UTP contacts are provided by residues 191 to 196 (KTKPTQ) and Lys-227. The Glutamine amidotransferase type-1 domain occupies 295-548 (TVAMVGKYVD…IAAAKARHQA (254 aa)). Position 357 (Gly-357) interacts with L-glutamine. The active-site Nucleophile; for glutamine hydrolysis is the Cys-384. Residues 385–388 (LGMQ), Glu-408, and Arg-474 contribute to the L-glutamine site. Active-site residues include His-521 and Glu-523.

The protein belongs to the CTP synthase family. Homotetramer.

The catalysed reaction is UTP + L-glutamine + ATP + H2O = CTP + L-glutamate + ADP + phosphate + 2 H(+). It catalyses the reaction L-glutamine + H2O = L-glutamate + NH4(+). The enzyme catalyses UTP + NH4(+) + ATP = CTP + ADP + phosphate + 2 H(+). It functions in the pathway pyrimidine metabolism; CTP biosynthesis via de novo pathway; CTP from UDP: step 2/2. With respect to regulation, allosterically activated by GTP, when glutamine is the substrate; GTP has no effect on the reaction when ammonia is the substrate. The allosteric effector GTP functions by stabilizing the protein conformation that binds the tetrahedral intermediate(s) formed during glutamine hydrolysis. Inhibited by the product CTP, via allosteric rather than competitive inhibition. Its function is as follows. Catalyzes the ATP-dependent amination of UTP to CTP with either L-glutamine or ammonia as the source of nitrogen. Regulates intracellular CTP levels through interactions with the four ribonucleotide triphosphates. This Verminephrobacter eiseniae (strain EF01-2) protein is CTP synthase.